Consider the following 628-residue polypeptide: MKLTEIQDPSFLKRMSVSELELFAGDIRRFLIEELATTGGHLAPNLGVVELTLALHREFDSPNDKFVWDVGHQAYVHKILTGRAGQFDTLRQHKGLCGFPKRNESVHDVWETGHSSTSLSAAMGIAVSNELKGNDDRAIAIIGDGALTGGMALEALNHIGAEQQNVIVILNDNEMSIAPNVGAMHQMLGRIRSSRKVRYAQDELETLIKKIPLIGGKLEKGGEKLKEAVKGALVPGMFFEELGFNYYGPVDGHDLTDLIEQLNYVKKEEGPVLLHVITKKGKGYRPAEYDGIGTWHGLGPYKIESGEVIKGKSKAPSYSFTVADTLTKMAREDDKLTLITPAMSVGSKLDCFEKEFPERMFDVGIAEQHAVTFAAGQATQGMKPVVSIYSTFFQRAYDQLVHDVARQNLDVTFTIDRSGLVGADGETHQGVFDIAFMRHVPNIRIVMAKDENELQHLLYSAVKYEGPIAVRFPRGEGIGVPMDETLHEISLDTWDVEREGTDVAIMAFGPQVQDALKIAELLEGDVSVRVINARTIKPLDEKMLNALYAEGIPLVTLEEAVLKGGFGSAVLEHANEQEAFPRVKRFGIPDWYIEHGGVNELLEEIGLLPGQIAEEVRSFVNQGKKQSV.

Thiamine diphosphate-binding positions include His-72 and 113–115 (GHS). Residue Asp-144 coordinates Mg(2+). Residues 145–146 (GA), Asn-173, Tyr-284, and Glu-367 contribute to the thiamine diphosphate site. Asn-173 serves as a coordination point for Mg(2+).

It belongs to the transketolase family. DXPS subfamily. As to quaternary structure, homodimer. Mg(2+) is required as a cofactor. The cofactor is thiamine diphosphate.

It carries out the reaction D-glyceraldehyde 3-phosphate + pyruvate + H(+) = 1-deoxy-D-xylulose 5-phosphate + CO2. It functions in the pathway metabolic intermediate biosynthesis; 1-deoxy-D-xylulose 5-phosphate biosynthesis; 1-deoxy-D-xylulose 5-phosphate from D-glyceraldehyde 3-phosphate and pyruvate: step 1/1. Catalyzes the acyloin condensation reaction between C atoms 2 and 3 of pyruvate and glyceraldehyde 3-phosphate to yield 1-deoxy-D-xylulose-5-phosphate (DXP). This Exiguobacterium sibiricum (strain DSM 17290 / CCUG 55495 / CIP 109462 / JCM 13490 / 255-15) protein is 1-deoxy-D-xylulose-5-phosphate synthase.